A 595-amino-acid polypeptide reads, in one-letter code: Arginine--tRNA ligase (595 aa).

A 'HIGH' region motif is present at residues 132–142 (ANPTGPLHVGH).

The protein belongs to the class-I aminoacyl-tRNA synthetase family. As to quaternary structure, monomer.

Its subcellular location is the cytoplasm. It catalyses the reaction tRNA(Arg) + L-arginine + ATP = L-arginyl-tRNA(Arg) + AMP + diphosphate. The chain is Arginine--tRNA ligase from Cupriavidus pinatubonensis (strain JMP 134 / LMG 1197) (Cupriavidus necator (strain JMP 134)).